A 161-amino-acid polypeptide reads, in one-letter code: Large ribosomal subunit protein uL30m (161 aa).

A mitochondrion-targeting transit peptide spans 1–34 (MAGILRLVVQRPPGGLQTVTKGVESLIGTDWIRH).

The protein belongs to the universal ribosomal protein uL30 family. As to quaternary structure, component of the mitochondrial ribosome large subunit (39S) which comprises a 16S rRNA and about 50 distinct proteins.

It localises to the mitochondrion. The sequence is that of Large ribosomal subunit protein uL30m (MRPL30) from Macaca fascicularis (Crab-eating macaque).